The sequence spans 56 residues: Large ribosomal subunit protein eL37 (56 aa).

Residues Cys19, Cys22, Cys34, and Cys37 each contribute to the Zn(2+) site. The segment at 19–37 (CRRCGSVSLNVHTKQCTSC) adopts a C4-type zinc-finger fold.

Belongs to the eukaryotic ribosomal protein eL37 family. It depends on Zn(2+) as a cofactor.

Binds to the 23S rRNA. The polypeptide is Large ribosomal subunit protein eL37 (Methanosarcina mazei (strain ATCC BAA-159 / DSM 3647 / Goe1 / Go1 / JCM 11833 / OCM 88) (Methanosarcina frisia)).